A 306-amino-acid polypeptide reads, in one-letter code: 4-diphosphocytidyl-2-C-methyl-D-erythritol kinase (306 aa).

Lys11 is an active-site residue. 98–108 (PIAGGMGGGSA) contacts ATP. The active site involves Asp140.

The protein belongs to the GHMP kinase family. IspE subfamily.

The enzyme catalyses 4-CDP-2-C-methyl-D-erythritol + ATP = 4-CDP-2-C-methyl-D-erythritol 2-phosphate + ADP + H(+). It participates in isoprenoid biosynthesis; isopentenyl diphosphate biosynthesis via DXP pathway; isopentenyl diphosphate from 1-deoxy-D-xylulose 5-phosphate: step 3/6. In terms of biological role, catalyzes the phosphorylation of the position 2 hydroxy group of 4-diphosphocytidyl-2C-methyl-D-erythritol. This Leifsonia xyli subsp. xyli (strain CTCB07) protein is 4-diphosphocytidyl-2-C-methyl-D-erythritol kinase.